Here is a 214-residue protein sequence, read N- to C-terminus: Phosphatidylserine decarboxylase proenzyme (214 aa).

Ser182 acts as the Schiff-base intermediate with substrate; via pyruvic acid in catalysis. A Pyruvic acid (Ser); by autocatalysis modification is found at Ser182.

It belongs to the phosphatidylserine decarboxylase family. PSD-A subfamily. As to quaternary structure, heterodimer of a large membrane-associated beta subunit and a small pyruvoyl-containing alpha subunit. Pyruvate serves as cofactor. Post-translationally, is synthesized initially as an inactive proenzyme. Formation of the active enzyme involves a self-maturation process in which the active site pyruvoyl group is generated from an internal serine residue via an autocatalytic post-translational modification. Two non-identical subunits are generated from the proenzyme in this reaction, and the pyruvate is formed at the N-terminus of the alpha chain, which is derived from the carboxyl end of the proenzyme. The post-translation cleavage follows an unusual pathway, termed non-hydrolytic serinolysis, in which the side chain hydroxyl group of the serine supplies its oxygen atom to form the C-terminus of the beta chain, while the remainder of the serine residue undergoes an oxidative deamination to produce ammonia and the pyruvoyl prosthetic group on the alpha chain.

It is found in the cell membrane. The enzyme catalyses a 1,2-diacyl-sn-glycero-3-phospho-L-serine + H(+) = a 1,2-diacyl-sn-glycero-3-phosphoethanolamine + CO2. It functions in the pathway phospholipid metabolism; phosphatidylethanolamine biosynthesis; phosphatidylethanolamine from CDP-diacylglycerol: step 2/2. Catalyzes the formation of phosphatidylethanolamine (PtdEtn) from phosphatidylserine (PtdSer). This Burkholderia cenocepacia (strain HI2424) protein is Phosphatidylserine decarboxylase proenzyme.